A 400-amino-acid chain; its full sequence is MGFITKAIPLALAAASVINGAEILETRAGVQTLADKYIVVMNDGISDKDFDSHRSWVNRNHRRRLIRRGAKAMGGMKHTYNFPTGLKGYSGHFDEQMINEISKRADVKYIERDARVQINAIEQQDNVPSWGLARVGSKEPGGTTYYYDSTAGEGSTAYVIDTGTDIQHEEFEGRATWGANFVDDMDMDCNGHGTHVSGTIGGKTFGVAKKSNVVAVKVLDCNGSGSNSGVIMGMEWATKDAQQKGADKAVANMSLGGAFSQASNDAAAAIAKGGVFLAVAAGNDNVDAADSSPASEPSICTIAASTEQDSKADFSNFGQVVDVYAPGDSITSAKPGGGSQVLSGISMATPHVAGLGAYLIGLGKGGGPGLCDTIKQMAIDVIQNPGASTTSKLINNGSGM.

Positions 1–20 (MGFITKAIPLALAAASVING) are cleaved as a signal peptide. Positions 21–119 (AEILETRAGV…IERDARVQIN (99 aa)) are excised as a propeptide. The Inhibitor I9 domain maps to 36–118 (KYIVVMNDGI…YIERDARVQI (83 aa)). In terms of domain architecture, Peptidase S8 spans 129 to 400 (SWGLARVGSK…SKLINNGSGM (272 aa)). Catalysis depends on charge relay system residues D161 and H192. N-linked (GlcNAc...) asparagine glycans are attached at residues N222 and N252. Residue S346 is the Charge relay system of the active site. N-linked (GlcNAc...) asparagine glycosylation is present at N396.

This sequence belongs to the peptidase S8 family.

The protein resides in the secreted. In terms of biological role, secreted subtilisin-like serine protease with keratinolytic activity that contributes to pathogenicity. The polypeptide is Subtilisin-like protease 7 (SUB7) (Trichophyton soudanense).